The primary structure comprises 134 residues: kinetoplast-associated protein 3 (134 aa).

The propeptide occupies 1–10 (MLRRSPTLLR). Residues 106-124 (PKAPKAAKSASSKVKTAAK) are compositionally biased toward low complexity. Residues 106 to 134 (PKAPKAAKSASSKVKTAAKTAKKTTAARK) form a disordered region. Residues 125–134 (TAKKTTAARK) show a composition bias toward basic residues.

It belongs to the KAP family. As to quaternary structure, associates with the kinetoplast DNA network.

The protein resides in the mitochondrion matrix. It localises to the kinetoplast. Histone H1-like DNA-binding protein involved in the organization and segregation of kinetoplast DNA (kDNA). The mitochondrial DNA of kinetoplastid protozoa consists of about 5,000 minicircles and 20 to 30 maxicircles. These circular DNAs are held together by catenation into a highly organized compact disk structure referred to as a kinetoplast DNA (kDNA) network. Binds preferentially to a specific fragment of minicircle DNA and is able to compact kDNA networks through DNA charge neutralization and condensation. The sequence is that of kinetoplast-associated protein 3 (KAP3) from Crithidia fasciculata.